Consider the following 103-residue polypeptide: Large ribosomal subunit protein uL24 (103 aa).

Belongs to the universal ribosomal protein uL24 family. As to quaternary structure, part of the 50S ribosomal subunit.

One of two assembly initiator proteins, it binds directly to the 5'-end of the 23S rRNA, where it nucleates assembly of the 50S subunit. Its function is as follows. One of the proteins that surrounds the polypeptide exit tunnel on the outside of the subunit. The polypeptide is Large ribosomal subunit protein uL24 (rplX) (Bacillus spizizenii (strain ATCC 23059 / NRRL B-14472 / W23) (Bacillus subtilis subsp. spizizenii)).